The sequence spans 487 residues: b(0,+)-type amino acid transporter 1 (487 aa).

The tract at residues 1 to 22 (MGETVPRRRREDEKSIQSDEPK) is disordered. The Cytoplasmic segment spans residues 1 to 31 (MGETVPRRRREDEKSIQSDEPKTTSLQKEVG). Phosphoserine is present on serine 18. The helical transmembrane segment at 32 to 55 (LISGICIIVGTIIGSGIFISPKSV) threads the bilayer. Position 43–47 (43–47 (IIGSG)) interacts with L-arginine. Topologically, residues 56 to 62 (LSNTQAV) are extracellular. Residues 63 to 84 (GPCLIIWAACGVLGTLGALCFA) traverse the membrane as a helical segment. The Cytoplasmic portion of the chain corresponds to 85–110 (ELGTMITKSGGEYPYLMEAFGPIPAY). The chain crosses the membrane as a helical span at residues 111-137 (LFSWSSLLVMKPSSFAIICLSFSEYVA). At 138-147 (TPFYSGCEPP) the chain is on the extracellular side. A run of 2 helical transmembrane segments spans residues 148–169 (KVVV…NSLS) and 170–193 (VRLG…IIII). The Extracellular segment spans residues 194–217 (SGLVLLAQGNTKNFENSFEGAEVS). Residues 218–238 (VGAISLALYNGLWAYDGWNQL) form a helical membrane-spanning segment. Residue aspartate 233 coordinates L-arginine. Topologically, residues 239 to 251 (NYITEELRNPFRN) are cytoplasmic. The chain crosses the membrane as a helical span at residues 252 to 274 (LPLAIIFGIPLVTVCYILINISY). Over 275 to 302 (FTVMTPTELLQSQAVAVTFGDRVLYPAS) the chain is Extracellular. A helical transmembrane segment spans residues 303–325 (WIVPVFVAFSTIGAANGTCFTAG). Topologically, residues 326 to 351 (RLVYVAGREGHMLKVLSYISVRRLTP) are cytoplasmic. 2 helical membrane-spanning segments follow: residues 352–370 (APAI…IPGD) and 371–391 (INSL…LTIL). The Cytoplasmic segment spans residues 392–410 (GLIVMRFTRKELERPIKVP). The helical transmembrane segment at 411–431 (IFIPILVTFIAAFLVLAPVIT) threads the bilayer. The Extracellular segment spans residues 432-434 (NPA). A helical transmembrane segment spans residues 435–450 (WEYLYCVLFILSGLVF). At 451–487 (YFLFVYYKFEWAQKISKPITMHLQMLMEVVPPEPDPK) the chain is on the cytoplasmic side.

The protein belongs to the amino acid-polyamine-organocation (APC) superfamily. As to quaternary structure, disulfide-linked heterodimer composed of the catalytic light chain subunit SLC7A9 and the heavy chain subunit. The heterodimer is the minimal functional unit. Assembles in heterotetramers (dimers of heterodimers) and higher order oligomers. Interacts with CAV1. As to expression, kidney and small intestine.

Its subcellular location is the apical cell membrane. The enzyme catalyses L-leucine(out) + L-arginine(in) = L-leucine(in) + L-arginine(out). It catalyses the reaction L-histidine(out) + L-arginine(in) = L-histidine(in) + L-arginine(out). It carries out the reaction L-arginine(in) + L-phenylalanine(out) = L-arginine(out) + L-phenylalanine(in). The catalysed reaction is L-cysteine(out) + L-arginine(in) = L-cysteine(in) + L-arginine(out). The enzyme catalyses L-cystine(out) + L-arginine(in) = L-cystine(in) + L-arginine(out). It catalyses the reaction L-lysine(out) + L-arginine(in) = L-lysine(in) + L-arginine(out). Functionally, mediates the electrogenic exchange between cationic amino acids and neutral amino acids, with a stoichiometry of 1:1. Has system b(0,+)-like activity with high affinity for extracellular cationic amino acids and L-cystine and lower affinity for intracellular neutral amino acids. Substrate exchange is driven by high concentration of intracellular neutral amino acids and the intracellular reduction of L-cystine to L-cysteine. Required for reabsorption of L-cystine and dibasic amino acids across the brush border membrane in renal proximal tubules. This Oryctolagus cuniculus (Rabbit) protein is b(0,+)-type amino acid transporter 1.